The sequence spans 156 residues: Transcriptional regulator MraZ (156 aa).

2 SpoVT-AbrB domains span residues 5–51 and 80–123; these read TFEK…GKAL and MAKL…SREA.

This sequence belongs to the MraZ family. In terms of assembly, forms oligomers.

It localises to the cytoplasm. The protein localises to the nucleoid. This Caulobacter vibrioides (strain ATCC 19089 / CIP 103742 / CB 15) (Caulobacter crescentus) protein is Transcriptional regulator MraZ.